We begin with the raw amino-acid sequence, 155 residues long: 6,7-dimethyl-8-ribityllumazine synthase (155 aa).

Residues phenylalanine 24, 58–60 (AFE), and 82–84 (AII) each bind 5-amino-6-(D-ribitylamino)uracil. Residue 87 to 88 (ST) participates in (2S)-2-hydroxy-3-oxobutyl phosphate binding. Catalysis depends on histidine 90, which acts as the Proton donor. A 5-amino-6-(D-ribitylamino)uracil-binding site is contributed by phenylalanine 115. Arginine 129 serves as a coordination point for (2S)-2-hydroxy-3-oxobutyl phosphate.

This sequence belongs to the DMRL synthase family.

It catalyses the reaction (2S)-2-hydroxy-3-oxobutyl phosphate + 5-amino-6-(D-ribitylamino)uracil = 6,7-dimethyl-8-(1-D-ribityl)lumazine + phosphate + 2 H2O + H(+). Its pathway is cofactor biosynthesis; riboflavin biosynthesis; riboflavin from 2-hydroxy-3-oxobutyl phosphate and 5-amino-6-(D-ribitylamino)uracil: step 1/2. Functionally, catalyzes the formation of 6,7-dimethyl-8-ribityllumazine by condensation of 5-amino-6-(D-ribitylamino)uracil with 3,4-dihydroxy-2-butanone 4-phosphate. This is the penultimate step in the biosynthesis of riboflavin. The protein is 6,7-dimethyl-8-ribityllumazine synthase of Chlorobium luteolum (strain DSM 273 / BCRC 81028 / 2530) (Pelodictyon luteolum).